The primary structure comprises 584 residues: Aspartate--tRNA(Asp/Asn) ligase (584 aa).

E174 serves as a coordination point for L-aspartate. An aspartate region spans residues 198-201; it reads QLFK. An L-aspartate-binding site is contributed by R220. ATP contacts are provided by residues 220–222 and Q229; that span reads RDE. L-aspartate is bound at residue H447. Residue E480 participates in ATP binding. Position 487 (R487) interacts with L-aspartate. 532-535 is an ATP binding site; sequence GFDR.

Belongs to the class-II aminoacyl-tRNA synthetase family. Type 1 subfamily. Homodimer.

Its subcellular location is the cytoplasm. It catalyses the reaction tRNA(Asx) + L-aspartate + ATP = L-aspartyl-tRNA(Asx) + AMP + diphosphate. In terms of biological role, aspartyl-tRNA synthetase with relaxed tRNA specificity since it is able to aspartylate not only its cognate tRNA(Asp) but also tRNA(Asn). Reaction proceeds in two steps: L-aspartate is first activated by ATP to form Asp-AMP and then transferred to the acceptor end of tRNA(Asp/Asn). The chain is Aspartate--tRNA(Asp/Asn) ligase from Endomicrobium trichonymphae.